The sequence spans 310 residues: Peroxidase 44 (310 aa).

The signal sequence occupies residues 1 to 20; sequence MRSITALFFLFCFLAPSALA. 4 disulfide bridges follow: cysteine 31-cysteine 110, cysteine 64-cysteine 69, cysteine 116-cysteine 305, and cysteine 194-cysteine 218. The Proton acceptor role is filled by histidine 62. The Ca(2+) site is built by aspartate 63, valine 66, glycine 68, aspartate 70, and serine 72. Proline 156 contacts substrate. Histidine 187 is a binding site for heme b. Position 188 (serine 188) interacts with Ca(2+). 3 residues coordinate Ca(2+): aspartate 229, threonine 232, and aspartate 237.

It belongs to the peroxidase family. Classical plant (class III) peroxidase subfamily. It depends on heme b as a cofactor. Ca(2+) serves as cofactor.

The protein localises to the secreted. The enzyme catalyses 2 a phenolic donor + H2O2 = 2 a phenolic radical donor + 2 H2O. Functionally, removal of H(2)O(2), oxidation of toxic reductants, biosynthesis and degradation of lignin, suberization, auxin catabolism, response to environmental stresses such as wounding, pathogen attack and oxidative stress. These functions might be dependent on each isozyme/isoform in each plant tissue. This Arabidopsis thaliana (Mouse-ear cress) protein is Peroxidase 44 (PER44).